The sequence spans 333 residues: 6-phosphogluconolactonase (333 aa).

It belongs to the cycloisomerase 2 family.

It carries out the reaction 6-phospho-D-glucono-1,5-lactone + H2O = 6-phospho-D-gluconate + H(+). It participates in carbohydrate degradation; pentose phosphate pathway; D-ribulose 5-phosphate from D-glucose 6-phosphate (oxidative stage): step 2/3. Functionally, catalyzes the hydrolysis of 6-phosphogluconolactone to 6-phosphogluconate. The protein is 6-phosphogluconolactonase of Cronobacter sakazakii (strain ATCC BAA-894) (Enterobacter sakazakii).